The primary structure comprises 458 residues: NADH-quinone oxidoreductase subunit N (458 aa).

14 consecutive transmembrane segments (helical) span residues 2 to 22 (LLIL…CFAL), 30 to 50 (IIYN…FKYS), 62 to 82 (GINI…SLII), 93 to 113 (AIKF…FVAI), 118 to 138 (FLLL…LAGF), 153 to 173 (FILG…IYGF), 196 to 216 (LIIG…SSPL), 235 to 255 (FTSA…KLII), 261 to 281 (INYN…AFGA), 290 to 310 (LMAY…ILPN), 319 to 339 (LYIL…IMLF), 361 to 381 (IAAL…LTGF), 397 to 417 (FTLA…YLKV), and 438 to 458 (LLLI…IILF).

This sequence belongs to the complex I subunit 2 family. NDH-1 is composed of 14 different subunits. Subunits NuoA, H, J, K, L, M, N constitute the membrane sector of the complex.

The protein localises to the cell inner membrane. The catalysed reaction is a quinone + NADH + 5 H(+)(in) = a quinol + NAD(+) + 4 H(+)(out). NDH-1 shuttles electrons from NADH, via FMN and iron-sulfur (Fe-S) centers, to quinones in the respiratory chain. The immediate electron acceptor for the enzyme in this species is believed to be ubiquinone. Couples the redox reaction to proton translocation (for every two electrons transferred, four hydrogen ions are translocated across the cytoplasmic membrane), and thus conserves the redox energy in a proton gradient. In Rickettsia typhi (strain ATCC VR-144 / Wilmington), this protein is NADH-quinone oxidoreductase subunit N.